The following is a 1201-amino-acid chain: MKFIKYLLILFLILKINYFVESGVDCQKNTEYFVENSCGKNPSKLNINTDIYYFESIGITPYSPPVYNESTTNYFWYLKDGIEYTFSYRYKGCQNIKSHSIVSQGMYYQLLSQPLCPNTYFNYTIYNSGEFGGNTNYYSTPQNIISSNYNGSCTINILITPLSNSKGAFQSSAAKYTYPTCGFNNGTISVDLTKGYSNCHLFSQFDTSFLYEIEPSSPCFYSGLESNYYYLFVDSKECATERLSIQLFNVFTPLEITFENVPDYNQNSIVSLSLSSGDNGILNKTNSFATVGGTGPDPLSTWSHKETKITSTTQFGYFYNKDFSTDPLKVICSFNDGFEPQKFNPNFNFTVTKSDTCLENVTITFYPLPSQTFVVHDYILGNILPLTNNVLSVQYNKFLHISEISSNSERYYSTAFYAPIYRVVETSNGIGCWKTYNITIGEYQIYSNLTMKVYDGDEYEYIFYPIEGVFVNVPANYFYIHYKVKDCEVESIIMIDKYEEITPMDDVKMDISIYELGNCTHETSILVNIDTVFGNFSKVYSSFSNGYFSFYLPNCSCNIGFYYSIPPLIDSETFSYGFISDLDCNSTGTVIQLLGSNGNTIQEVYSNGIKLIVNNDVDTDFAYNIGPGENNVTIKYSNTKGTCYKSQMINIQSPYEVPLVEVTPVIDCDSSDGKISISNYMNFYSLDIIIDSSTIPINSGLVSNLPTGTYTIVYGNSGSCANSIDVYVPSSEQYVEITTSVISHPTCGEQSLNGDGKVNVTLKVLGIKKNTFYIQNQNQISSLTFSDGGVYIAAAPGLNTLSISYGGCIWNRDVNTTISKPTFSFEKIYNDTCLSSVYYKLINNNTNIAINSITSPYTLYSYQNEYYTQMATNLIYPYTVTWNTYCTETFYQEFTFDTPFNYYSNYIQYEIVKADNCNSFKIDIIIKNMNTFQKVTLSSKYPTPINSTHAIFKNLPPSISYDISFTLFDGCSGTEMVGYQQLSNGNTKETIDIIKVNDICNSGKGSIQLSNMDTSNHYYYVKTFSDYYVYTSYPIQPTTNDNGTIISLLSNLPVGSYNITRNCKSITNCYIETKVVIENKDPIIESISVTDSYDKLNNGTAEIKLNYNSTYPINFKIIGTQLSNQNGIFSNLPPKTYEVQVTLTDRMCPITISQSFTINFKTSPTPPPLPQDPSDELSTSSFIQLNILSLLLISIFTIFIL.

The N-terminal stretch at 1–22 (MKFIKYLLILFLILKINYFVES) is a signal peptide. Residues 23-1180 (GVDCQKNTEY…QDPSDELSTS (1158 aa)) are Extracellular-facing. N-linked (GlcNAc...) asparagine glycosylation is found at N68, N122, N150, N185, N283, N348, N360, N437, N448, N518, N535, N554, N585, N631, N759, N815, N830, N844, N946, N1042, N1058, N1098, and N1108. Residues 1181 to 1201 (SFIQLNILSLLLISIFTIFIL) form a helical membrane-spanning segment.

It localises to the membrane. The sequence is that of Protein dduB (dduB) from Dictyostelium discoideum (Social amoeba).